We begin with the raw amino-acid sequence, 878 residues long: MLPRLLAVVRGPGSCRGWREGSPARGSASATVAPPVALPAQAQVVVCGGGIMGTSVAYHLSKMGWKDVVLLEQGRLAAGSTRFCAGILSTARHLAIEQKMADYSNKLYHQLEQETGIQTGYTRTGSIFLAQTQDRLISLKRINSRLNVIGIPCEIISPKKVAELHPLLNVHDLVGAMHVPEDAVVSSADVALALASAASQSGVQIYDRTSILHVMVKKGQVAGVETDKGQIQCQYFVNCAGQWAYELGLCSEEPVSIPLHACEHFYLLTRPWETPLPSSTPTVVDADGRIYIRNWQGGILSGGFEKNPKPIFTEGKNQLEIQNLQEDWDHFEPLLSSLLRRMPQLETLEIVKLVNCPETFTPDMRCIMGESPSVRGYFVLVGMNSAGLSFGGGAGKYLAEWMVYGYPSENVWELDLKRFGALQSSRTFLRHRVMEVMPLLYDLKVPRWDFQTGRQLRTSPLYDRLDAQGARWMEKHGFERPKYFIPPDKDLLALEQSKTFYKPDWFEIVESEVKCCKEAVCVIDMSSFTKFEITSTGDQALEILQYLFSNDLDVPVGHIVHTGMLNERGGYENDCSIARLSKRSFFMISPTDQQVHCWAWLKKYMPEDSNLILEDVTWKYTALNLIGPRTVDVLSELSYAPMTPDHFPSLFCKEMSVGYANGIRVMSMTHTGEPGFMLYIPIEYALHVYNEVMSVGQKYGIRNAGYYALRSLRIEKFFAFWGQDLNTLTTPLECGGESRVKLDKGVDFIGRDALLQQRQNGVYNRLTMFILDDHDTDLDLWPWWGEPIYRNGRYVGKTTSSAYGYTLERHVCLGFVHNFSEDTGEEQVVTADFINRGEYEIDIAGHRFQAKAKLYPVPSLLTHKRRKEDVELSDLHGK.

A mitochondrion-targeting transit peptide spans 1 to 26 (MLPRLLAVVRGPGSCRGWREGSPARG).

It belongs to the GcvT family. In terms of assembly, heterodimer of a catalytic (PDP1) and a regulatory (PDPR) subunit.

It localises to the mitochondrion matrix. Functionally, decreases the sensitivity of PDP1 to magnesium ions, and this inhibition is reversed by the polyamine spermine. This chain is Pyruvate dehydrogenase phosphatase regulatory subunit, mitochondrial (PDPR), found in Bos taurus (Bovine).